The chain runs to 130 residues: Protein YoeA (130 aa).

The N-terminal stretch at 1–28 (MLYNIPCRIYILSTLSLCISGIVSTATA) is a signal peptide. The region spanning 51-130 (NLWESPATIQ…RCRRYSRGER (80 aa)) is the TBDR plug domain.

Belongs to the TonB-dependent receptor family.

The protein is Protein YoeA (yoeA) of Escherichia coli (strain K12).